Reading from the N-terminus, the 588-residue chain is Pleckstrin homology domain-containing family A member 4 (588 aa).

The PH domain maps to 54-153 (PVHIRGWLHK…WLRALGRASR (100 aa)). Disordered stretches follow at residues 155-349 (EGED…QASM) and 495-588 (AGLG…VDHL). Position 164 is a phosphoserine (Ser164). Over residues 183 to 193 (VNRREEGRISE) the composition is skewed to basic and acidic residues. The segment covering 211–222 (TPNSTVDLQTDT) has biased composition (polar residues). 2 stretches are compositionally biased toward low complexity: residues 246-260 (PRPRSAPARRPPLSA) and 321-334 (QRTQSTQATSGSST). Residue Ser562 is modified to Phosphoserine.

It localises to the cytoplasm. The protein resides in the membrane. In terms of biological role, binds specifically to phosphatidylinositol 3-phosphate (PtdIns3P), but not to other phosphoinositides. The polypeptide is Pleckstrin homology domain-containing family A member 4 (Plekha4) (Mus musculus (Mouse)).